The chain runs to 320 residues: ATP-dependent 6-phosphofructokinase (320 aa).

G12 provides a ligand contact to ATP. Residues 22-26 (RGVVR) and 55-60 (RYSVSD) contribute to the ADP site. ATP is bound by residues 73–74 (RF) and 103–106 (GDGS). Position 104 (D104) interacts with Mg(2+). Position 126–128 (126–128 (TID)) interacts with substrate. D128 (proton acceptor) is an active-site residue. R155 is an ADP binding site. Substrate-binding positions include R163 and 170–172 (MGR). Residues 186-188 (GCE), K212, and 214-216 (KKH) contribute to the ADP site. Substrate is bound by residues E223, R244, and 250-253 (HIQR).

Belongs to the phosphofructokinase type A (PFKA) family. ATP-dependent PFK group I subfamily. Prokaryotic clade 'B1' sub-subfamily. As to quaternary structure, homotetramer. Requires Mg(2+) as cofactor.

The protein localises to the cytoplasm. It carries out the reaction beta-D-fructose 6-phosphate + ATP = beta-D-fructose 1,6-bisphosphate + ADP + H(+). Its pathway is carbohydrate degradation; glycolysis; D-glyceraldehyde 3-phosphate and glycerone phosphate from D-glucose: step 3/4. Its activity is regulated as follows. Allosterically activated by ADP and other diphosphonucleosides, and allosterically inhibited by phosphoenolpyruvate. Functionally, catalyzes the phosphorylation of D-fructose 6-phosphate to fructose 1,6-bisphosphate by ATP, the first committing step of glycolysis. This chain is ATP-dependent 6-phosphofructokinase, found in Salmonella gallinarum (strain 287/91 / NCTC 13346).